The sequence spans 363 residues: Phosphoserine aminotransferase (363 aa).

An L-glutamate-binding site is contributed by Arg-42. Residues 76-77 (GR), Trp-102, Thr-156, Asp-175, and Gln-198 contribute to the pyridoxal 5'-phosphate site. The residue at position 199 (Lys-199) is an N6-(pyridoxal phosphate)lysine. Residue 240–241 (NT) participates in pyridoxal 5'-phosphate binding.

This sequence belongs to the class-V pyridoxal-phosphate-dependent aminotransferase family. SerC subfamily. Homodimer. The cofactor is pyridoxal 5'-phosphate.

The protein localises to the cytoplasm. The enzyme catalyses O-phospho-L-serine + 2-oxoglutarate = 3-phosphooxypyruvate + L-glutamate. The catalysed reaction is 4-(phosphooxy)-L-threonine + 2-oxoglutarate = (R)-3-hydroxy-2-oxo-4-phosphooxybutanoate + L-glutamate. It participates in amino-acid biosynthesis; L-serine biosynthesis; L-serine from 3-phospho-D-glycerate: step 2/3. The protein operates within cofactor biosynthesis; pyridoxine 5'-phosphate biosynthesis; pyridoxine 5'-phosphate from D-erythrose 4-phosphate: step 3/5. Its function is as follows. Catalyzes the reversible conversion of 3-phosphohydroxypyruvate to phosphoserine and of 3-hydroxy-2-oxo-4-phosphonooxybutanoate to phosphohydroxythreonine. The sequence is that of Phosphoserine aminotransferase from Shewanella sp. (strain ANA-3).